The primary structure comprises 162 residues: Putative colanic acid biosynthesis acetyltransferase WcaB (162 aa).

It belongs to the transferase hexapeptide repeat family.

It functions in the pathway slime biogenesis; slime polysaccharide biosynthesis. The protein is Putative colanic acid biosynthesis acetyltransferase WcaB (wcaB) of Escherichia coli O157:H7.